Consider the following 269-residue polypeptide: 5'-nucleotidase SurE (269 aa).

A divalent metal cation is bound by residues aspartate 11, aspartate 12, serine 43, and asparagine 101.

Belongs to the SurE nucleotidase family. A divalent metal cation is required as a cofactor.

The protein resides in the cytoplasm. The catalysed reaction is a ribonucleoside 5'-phosphate + H2O = a ribonucleoside + phosphate. In terms of biological role, nucleotidase that shows phosphatase activity on nucleoside 5'-monophosphates. This chain is 5'-nucleotidase SurE, found in Prochlorococcus marinus (strain MIT 9515).